We begin with the raw amino-acid sequence, 157 residues long: Crossover junction endodeoxyribonuclease RuvC (157 aa).

Catalysis depends on residues Asp7, Glu67, and Asp140. Residues Asp7, Glu67, and Asp140 each contribute to the Mg(2+) site.

The protein belongs to the RuvC family. As to quaternary structure, homodimer which binds Holliday junction (HJ) DNA. The HJ becomes 2-fold symmetrical on binding to RuvC with unstacked arms; it has a different conformation from HJ DNA in complex with RuvA. In the full resolvosome a probable DNA-RuvA(4)-RuvB(12)-RuvC(2) complex forms which resolves the HJ. Mg(2+) is required as a cofactor.

It localises to the cytoplasm. It catalyses the reaction Endonucleolytic cleavage at a junction such as a reciprocal single-stranded crossover between two homologous DNA duplexes (Holliday junction).. Its function is as follows. The RuvA-RuvB-RuvC complex processes Holliday junction (HJ) DNA during genetic recombination and DNA repair. Endonuclease that resolves HJ intermediates. Cleaves cruciform DNA by making single-stranded nicks across the HJ at symmetrical positions within the homologous arms, yielding a 5'-phosphate and a 3'-hydroxyl group; requires a central core of homology in the junction. The consensus cleavage sequence is 5'-(A/T)TT(C/G)-3'. Cleavage occurs on the 3'-side of the TT dinucleotide at the point of strand exchange. HJ branch migration catalyzed by RuvA-RuvB allows RuvC to scan DNA until it finds its consensus sequence, where it cleaves and resolves the cruciform DNA. The chain is Crossover junction endodeoxyribonuclease RuvC from Rickettsia akari (strain Hartford).